Here is a 210-residue protein sequence, read N- to C-terminus: Cytochrome c biogenesis ATP-binding export protein CcmA (210 aa).

The ABC transporter domain occupies 4-207; that stretch reads LAVRDLAVAR…RQSRPAGFNE (204 aa). 36-43 serves as a coordination point for ATP; sequence GPNGIGKT.

It belongs to the ABC transporter superfamily. CcmA exporter (TC 3.A.1.107) family. The complex is composed of two ATP-binding proteins (CcmA) and two transmembrane proteins (CcmB).

It is found in the cell inner membrane. It carries out the reaction heme b(in) + ATP + H2O = heme b(out) + ADP + phosphate + H(+). Its function is as follows. Part of the ABC transporter complex CcmAB involved in the biogenesis of c-type cytochromes; once thought to export heme, this seems not to be the case, but its exact role is uncertain. Responsible for energy coupling to the transport system. The sequence is that of Cytochrome c biogenesis ATP-binding export protein CcmA from Paracoccus denitrificans (strain Pd 1222).